A 363-amino-acid chain; its full sequence is Biotin synthase (363 aa).

In terms of domain architecture, Radical SAM core spans 40 to 268; the sequence is NVVQVSTLLS…ETQVRLSAGR (229 aa). [4Fe-4S] cluster-binding residues include Cys55, Cys59, and Cys62. [2Fe-2S] cluster-binding residues include Cys99, Cys131, Cys191, and Arg263.

This sequence belongs to the radical SAM superfamily. Biotin synthase family. In terms of assembly, homodimer. Requires [4Fe-4S] cluster as cofactor. [2Fe-2S] cluster serves as cofactor.

The catalysed reaction is (4R,5S)-dethiobiotin + (sulfur carrier)-SH + 2 reduced [2Fe-2S]-[ferredoxin] + 2 S-adenosyl-L-methionine = (sulfur carrier)-H + biotin + 2 5'-deoxyadenosine + 2 L-methionine + 2 oxidized [2Fe-2S]-[ferredoxin]. Its pathway is cofactor biosynthesis; biotin biosynthesis; biotin from 7,8-diaminononanoate: step 2/2. Functionally, catalyzes the conversion of dethiobiotin (DTB) to biotin by the insertion of a sulfur atom into dethiobiotin via a radical-based mechanism. This is Biotin synthase from Flavobacterium johnsoniae (strain ATCC 17061 / DSM 2064 / JCM 8514 / BCRC 14874 / CCUG 350202 / NBRC 14942 / NCIMB 11054 / UW101) (Cytophaga johnsonae).